We begin with the raw amino-acid sequence, 585 residues long: Poly(A) RNA polymerase, mitochondrial (585 aa).

Residues 1–37 (MAARGVGLLTRLPVCSQRRNRIPRSISRLLSCPGTIA) constitute a mitochondrion transit peptide. At K90 the chain carries N6-acetyllysine. ATP contacts are provided by residues 107 to 109 (YES) and 244 to 245 (GC). The Mg(2+) site is built by D246 and D248. The PAP-associated domain maps to 441–486 (ELLIKEFFEYFGNFAFNKNSINIRQGREQNKPDSSPLYIQNPFETS). Residues 537 to 585 (PGSGHTSLSRKKKKKPMSEKVKGLLASIKSNSPDSSTDTSGKRTISTQA) are disordered. Residues 564-585 (IKSNSPDSSTDTSGKRTISTQA) show a composition bias toward polar residues.

This sequence belongs to the DNA polymerase type-B-like family. In terms of assembly, homodimer. Mg(2+) serves as cofactor. It depends on Mn(2+) as a cofactor.

It is found in the cytoplasm. The protein resides in the mitochondrion. The enzyme catalyses RNA(n) + ATP = RNA(n)-3'-adenine ribonucleotide + diphosphate. Polymerase that creates the 3' poly(A) tail of mitochondrial transcripts. Can use all four nucleotides, but has higher activity with ATP and UTP (in vitro). Plays a role in replication-dependent histone mRNA degradation. May be involved in the terminal uridylation of mature histone mRNAs before their degradation is initiated. Might be responsible for the creation of some UAA stop codons which are not encoded in mtDNA. The protein is Poly(A) RNA polymerase, mitochondrial (Mtpap) of Mus musculus (Mouse).